Consider the following 714-residue polypeptide: DNA ligase (714 aa).

NAD(+) contacts are provided by residues aspartate 47–aspartate 51, serine 96–leucine 97, and glutamate 130. Catalysis depends on lysine 132, which acts as the N6-AMP-lysine intermediate. 4 residues coordinate NAD(+): arginine 153, glutamate 190, lysine 306, and lysine 330. Cysteine 435, cysteine 438, cysteine 453, and cysteine 459 together coordinate Zn(2+). Positions arginine 636 to glycine 714 constitute a BRCT domain.

Belongs to the NAD-dependent DNA ligase family. LigA subfamily. The cofactor is Mg(2+). It depends on Mn(2+) as a cofactor.

It carries out the reaction NAD(+) + (deoxyribonucleotide)n-3'-hydroxyl + 5'-phospho-(deoxyribonucleotide)m = (deoxyribonucleotide)n+m + AMP + beta-nicotinamide D-nucleotide.. Functionally, DNA ligase that catalyzes the formation of phosphodiester linkages between 5'-phosphoryl and 3'-hydroxyl groups in double-stranded DNA using NAD as a coenzyme and as the energy source for the reaction. It is essential for DNA replication and repair of damaged DNA. This chain is DNA ligase, found in Nitrobacter hamburgensis (strain DSM 10229 / NCIMB 13809 / X14).